We begin with the raw amino-acid sequence, 899 residues long: Bifunctional uridylyltransferase/uridylyl-removing enzyme (899 aa).

Residues 1 to 342 are uridylyltransferase; it reads MPQVDPDLFD…PGDAAGRVEP (342 aa). The interval 343-705 is uridylyl-removing; that stretch reads LNERFQVRDG…TTQREFEGAT (363 aa). Residues 461–583 enclose the HD domain; sequence VDAHTLNLIK…VRDQTYLDYL (123 aa). ACT domains are found at residues 706–789 and 816–899; these read QIFI…IIQR and ILEI…RISI.

This sequence belongs to the GlnD family. Mg(2+) serves as cofactor.

It carries out the reaction [protein-PII]-L-tyrosine + UTP = [protein-PII]-uridylyl-L-tyrosine + diphosphate. It catalyses the reaction [protein-PII]-uridylyl-L-tyrosine + H2O = [protein-PII]-L-tyrosine + UMP + H(+). Uridylyltransferase (UTase) activity is inhibited by glutamine, while glutamine activates uridylyl-removing (UR) activity. Modifies, by uridylylation and deuridylylation, the PII regulatory proteins (GlnB and homologs), in response to the nitrogen status of the cell that GlnD senses through the glutamine level. Under low glutamine levels, catalyzes the conversion of the PII proteins and UTP to PII-UMP and PPi, while under higher glutamine levels, GlnD hydrolyzes PII-UMP to PII and UMP (deuridylylation). Thus, controls uridylylation state and activity of the PII proteins, and plays an important role in the regulation of nitrogen fixation and metabolism. This is Bifunctional uridylyltransferase/uridylyl-removing enzyme from Azotobacter vinelandii (strain DJ / ATCC BAA-1303).